The chain runs to 363 residues: DNA replication and repair protein RecF (363 aa).

31–38 (GANSSGKT) lines the ATP pocket.

The protein belongs to the RecF family.

The protein localises to the cytoplasm. In terms of biological role, the RecF protein is involved in DNA metabolism; it is required for DNA replication and normal SOS inducibility. RecF binds preferentially to single-stranded, linear DNA. It also seems to bind ATP. The polypeptide is DNA replication and repair protein RecF (Nitrosococcus oceani (strain ATCC 19707 / BCRC 17464 / JCM 30415 / NCIMB 11848 / C-107)).